The following is a 101-amino-acid chain: Protein RnfH (101 aa).

This sequence belongs to the UPF0125 (RnfH) family.

This is Protein RnfH from Pseudomonas aeruginosa (strain LESB58).